The chain runs to 195 residues: Endoribonuclease YbeY (195 aa).

Zn(2+) is bound by residues H153, H157, and H163.

Belongs to the endoribonuclease YbeY family. It depends on Zn(2+) as a cofactor.

It is found in the cytoplasm. In terms of biological role, single strand-specific metallo-endoribonuclease involved in late-stage 70S ribosome quality control and in maturation of the 3' terminus of the 16S rRNA. The chain is Endoribonuclease YbeY from Prochlorococcus marinus (strain SARG / CCMP1375 / SS120).